The following is a 990-amino-acid chain: MPRRSILSATERESLLALPDAKDELIRHYTFNETDLSVIRQRRGAANRLGFAVQLCYLRFPGTFLGVDEPPFPPLLRMVAAQLKMPVESWSEYGQREQTRREHLVELQTVFGFKPFTMSHYRQAVHTLTELALQTDKGIVLASALVENLRRQSIILPAMNAIERASAEAITRANRRIYAALTDSLLSPHRQRLDELLKRKDGSKVTWLAWLRQSPAKPNSRHMLEHIERLKSWQALDLPAGIERQVHQNRLLKIAREGGQMTPADLAKFEVQRRYATLVALAIEGMATVTDEIIDLHDRIIGKLFNAAKNKHQQQFQASGKAINDKVRMYGRIGQALIEAKQSGSDPFAAIEAVMPWDTFAASVTEAQTLARPADFDFLHHIGESYATLRRYAPQFLGVLKLRAAPAAKGVLDAIDMLRGMNSDSARKVPADAPTAFIKPRWAKLVLTDDGIDRRYYELCALSELKNALRSGDVWVQGSRQFKDFDEYLVPVEKFATLKLASELPLAVATDCDQYLHDRLELLEAQLATVNRMASANDLPDAIITTASGLKITPLDAAVPDAAQAMIDQTAMLLPHLKITELLMEVDEWTGFTRHFTHLKTSDTAKDKTLLLTTILADAINLGLTKMAESCPGTTYAKLSWLQAWHIRDETYSTALAELVNAQFRQPFAGNWGDGTTSSSDGQNFRTGSKAESTGHINPKYGSSPGRTFYTHISDQYAPFSAKVVNVGIRDSTYVLDGLLYHESDLRIEEHYTDTAGFTDHVFGLMHLLGFRFAPRIRDLGETKLFIPKGDAAYDALKPMISSDRLNIKQIRAHWDEILRLATSIKQGTVTASLMLRKLGSYPRQNGLAVALRELGRIERTLFILDWLQSVELRRRVHAGLNKGEARNALARAVFFYRLGEIRDRSFEQQRYRASGLNLVTAAIVLWNTVYLERATSALRGNGTALDDTLLQYLSPLGWEHINLTGDYLWRSSAKVGAGKFRPLRPLPPA.

The disordered stretch occupies residues 673–698 (GDGTTSSSDGQNFRTGSKAESTGHIN). Residues 674-696 (DGTTSSSDGQNFRTGSKAESTGH) are compositionally biased toward polar residues.

Belongs to the transposase 7 family.

In terms of biological role, required for transposition of transposon Tn3926. This is Transposase for transposon Tn3926 (tnpA) from Escherichia coli.